The chain runs to 508 residues: Protein adenylyltransferase Fic (508 aa).

The helical transmembrane segment at 48–70 (FYRFALFFIAGSFAAFSFHALTS) threads the bilayer. 2 TPR repeats span residues 132–165 (ALGALRLAQDMHLSGKDDKASRLFEHALALAPKH) and 166–200 (PEVLLRYGEFLEHNQRNIVLADQYYFQALTLCPSN). The Inhibitory (S/T)XXXE(G/N) motif motif lies at 257-262 (SVGIEG). ATP-binding positions include E261 and 342-345 (VGGH). The 136-residue stretch at 311–446 (ITIKDILELH…IRPFVRFIAD (136 aa)) folds into the Fido domain. The active site involves H389. ATP-binding positions include 393–400 (DGNGRTSR), 425–426 (YY), and N433.

The protein belongs to the fic family. As to quaternary structure, homodimer.

Its subcellular location is the membrane. It catalyses the reaction L-tyrosyl-[protein] + ATP = O-(5'-adenylyl)-L-tyrosyl-[protein] + diphosphate. The catalysed reaction is L-threonyl-[protein] + ATP = 3-O-(5'-adenylyl)-L-threonyl-[protein] + diphosphate. The enzyme catalyses 3-O-(5'-adenylyl)-L-threonyl-[protein] + H2O = L-threonyl-[protein] + AMP + H(+). With respect to regulation, the side chain of Glu-261 determines which of the two opposing activities (AMPylase or de-AMPylase) will take place. In response to endoplasmic reticulum stress, mediates de-AMPylase activity. Adenylyltransferase activity is inhibited by the inhibitory helix present at the N-terminus: Glu-261 binds ATP and competes with ATP-binding at Arg-400, thereby preventing adenylyltransferase activity. In unstressed cells, disengagement of Glu-261 promotes adenylyltransferase activity. Activation dissociates ATP-binding from Glu-261, allowing ordered binding of the entire ATP moiety with the alpha-phosphate in an orientation that is productive for accepting an incoming target hydroxyl side chain. Protein that can both mediate the addition of adenosine 5'-monophosphate (AMP) to specific residues of target proteins (AMPylation), and the removal of the same modification from target proteins (de-AMPylation), depending on the context. The side chain of Glu-261 determines which of the two opposing activities (AMPylase or de-AMPylase) will take place. Acts as a key regulator of the unfolded protein response (UPR) by mediating AMPylation or de-AMPylation of Hsc70-3/BiP. In unstressed cells, acts as an adenylyltransferase by mediating AMPylation of Hsc70-3/BiP at 'Thr-518', thereby inactivating it. In response to endoplasmic reticulum stress, acts as a phosphodiesterase by mediating removal of ATP (de-AMPylation) from Hsc70-3/BiP at 'Thr-518', leading to restore HSPA5/BiP activity. In Drosophila persimilis (Fruit fly), this protein is Protein adenylyltransferase Fic.